We begin with the raw amino-acid sequence, 236 residues long: Pyridoxine 5'-phosphate synthase (236 aa).

Asparagine 6 contributes to the 3-amino-2-oxopropyl phosphate binding site. A 1-deoxy-D-xylulose 5-phosphate-binding site is contributed by 8-9 (DH). Arginine 17 is a binding site for 3-amino-2-oxopropyl phosphate. The Proton acceptor role is filled by histidine 42. Residues arginine 44 and histidine 49 each coordinate 1-deoxy-D-xylulose 5-phosphate. The active-site Proton acceptor is glutamate 69. Threonine 99 is a binding site for 1-deoxy-D-xylulose 5-phosphate. The active-site Proton donor is histidine 192. 3-amino-2-oxopropyl phosphate contacts are provided by residues glycine 193 and 216–217 (GH).

It belongs to the PNP synthase family. Homooctamer; tetramer of dimers.

The protein resides in the cytoplasm. The catalysed reaction is 3-amino-2-oxopropyl phosphate + 1-deoxy-D-xylulose 5-phosphate = pyridoxine 5'-phosphate + phosphate + 2 H2O + H(+). It functions in the pathway cofactor biosynthesis; pyridoxine 5'-phosphate biosynthesis; pyridoxine 5'-phosphate from D-erythrose 4-phosphate: step 5/5. Its function is as follows. Catalyzes the complicated ring closure reaction between the two acyclic compounds 1-deoxy-D-xylulose-5-phosphate (DXP) and 3-amino-2-oxopropyl phosphate (1-amino-acetone-3-phosphate or AAP) to form pyridoxine 5'-phosphate (PNP) and inorganic phosphate. The polypeptide is Pyridoxine 5'-phosphate synthase (Aquifex pyrophilus).